Here is an 80-residue protein sequence, read N- to C-terminus: Photosystem II extrinsic protein V (80 aa).

A heme-binding site is contributed by methionine 47.

Belongs to the cytochrome c family. PsbV subfamily. PSII is composed of 1 copy each of membrane proteins PsbA, PsbB, PsbC, PsbD, PsbE, PsbF, PsbH, PsbI, PsbJ, PsbK, PsbL, PsbM, PsbT, PsbY, PsbZ, Psb30/Ycf12, at least 3 peripheral proteins of the oxygen-evolving complex and a large number of cofactors. It forms dimeric complexes. The cofactor is heme.

It localises to the plastid. The protein localises to the chloroplast thylakoid membrane. Functionally, one of the extrinsic, lumenal subunits of photosystem II (PSII). PSII is a light-driven water plastoquinone oxidoreductase, using light energy to abstract electrons from H(2)O, generating a proton gradient subsequently used for ATP formation. The extrinsic proteins stabilize the structure of photosystem II oxygen-evolving complex (OEC), the ion environment of oxygen evolution and protect the OEC against heat-induced inactivation. This chain is Photosystem II extrinsic protein V, found in Thalassiosira weissflogii (Marine diatom).